A 325-amino-acid chain; its full sequence is Replication factor C small subunit (325 aa).

Residue 44 to 51 (GPPGTGKT) coordinates ATP.

The protein belongs to the activator 1 small subunits family. RfcS subfamily. In terms of assembly, heteromultimer composed of small subunits (RfcS) and large subunits (RfcL).

Its function is as follows. Part of the RFC clamp loader complex which loads the PCNA sliding clamp onto DNA. This is Replication factor C small subunit from Thermofilum pendens (strain DSM 2475 / Hrk 5).